The following is a 441-amino-acid chain: Putative F-box/FBD/LRR-repeat protein At4g00315 (441 aa).

The F-box domain occupies Met1–Asp47. 8 LRR repeats span residues Gln57 to Leu82, Ile87 to Leu115, Ile137 to Arg164, Val165 to Arg190, Leu211 to Asp236, Ser243 to Leu271, Leu293 to Ser318, and Cys319 to Val344. Residues Gln358 to Phe410 enclose the FBD domain.

This chain is Putative F-box/FBD/LRR-repeat protein At4g00315, found in Arabidopsis thaliana (Mouse-ear cress).